The chain runs to 361 residues: Putative F-box protein At1g33010 (361 aa).

One can recognise an F-box domain in the interval 4–50 (GNTLDSIPTDLILEIFSRLSAKSVGRLRCLSKLWRKGEWFFFSSLQP). The tract at residues 308-339 (SIRPTEQKHKPTSTETSMSRKDHQVRTIDQPQ) is disordered.

The chain is Putative F-box protein At1g33010 from Arabidopsis thaliana (Mouse-ear cress).